The primary structure comprises 603 residues: Adenine deaminase (603 aa).

The protein belongs to the metallo-dependent hydrolases superfamily. Adenine deaminase family. In terms of assembly, homodimer. Mn(2+) is required as a cofactor.

The catalysed reaction is adenine + H2O + H(+) = hypoxanthine + NH4(+). The polypeptide is Adenine deaminase (Klebsiella pneumoniae subsp. pneumoniae (strain ATCC 700721 / MGH 78578)).